The primary structure comprises 370 residues: 3-isopropylmalate dehydrogenase (370 aa).

77–90 (GPKWDSVPYEVRPE) contributes to the NAD(+) binding site. Substrate-binding residues include R97, R107, R135, and D226. Mg(2+) is bound by residues D226, D250, and D254. 290 to 302 (GSAPDIAGKGIAN) contacts NAD(+).

This sequence belongs to the isocitrate and isopropylmalate dehydrogenases family. LeuB type 1 subfamily. As to quaternary structure, homodimer. Mg(2+) serves as cofactor. Mn(2+) is required as a cofactor.

It localises to the cytoplasm. It catalyses the reaction (2R,3S)-3-isopropylmalate + NAD(+) = 4-methyl-2-oxopentanoate + CO2 + NADH. Its pathway is amino-acid biosynthesis; L-leucine biosynthesis; L-leucine from 3-methyl-2-oxobutanoate: step 3/4. In terms of biological role, catalyzes the oxidation of 3-carboxy-2-hydroxy-4-methylpentanoate (3-isopropylmalate) to 3-carboxy-4-methyl-2-oxopentanoate. The product decarboxylates to 4-methyl-2 oxopentanoate. This chain is 3-isopropylmalate dehydrogenase, found in Brucella melitensis biotype 1 (strain ATCC 23456 / CCUG 17765 / NCTC 10094 / 16M).